A 1049-amino-acid chain; its full sequence is Toll-like receptor 7 (1049 aa).

The signal sequence occupies residues 1 to 26 (MVFPMWTLKRQILILFNIILISKLLG). Over 27–839 (ARWFPKTLPC…LYTCELDLTN (813 aa)) the chain is Extracellular. 6 LRR repeats span residues 43 to 64 (PKNHVIVDCTDKHLTEIPGGIP), 65 to 87 (TNTTNLTLTINHIPDISPASFHR), 110 to 126 (NMCIKRLQIKPRSFSGL), 127 to 149 (TYLKSLYLDGNQLLEIPQGLPPS), 151 to 170 (QLLSLEANNIFSIRKENLTE), and 171 to 195 (LANIEILYLGQNCYYRNPCYVSYSI). N-linked (GlcNAc...) asparagine glycans are attached at residues Asn66 and Asn69. Asn167 is a glycosylation site (N-linked (GlcNAc...) asparagine). Asn202 and Asn215 each carry an N-linked (GlcNAc...) asparagine glycan. LRR repeat units follow at residues 203 to 226 (LTKLKVLSLKDNNVTAVPTVLPST), 228 to 247 (TELYLYNNMIAKIQEDDFNN), 248 to 275 (LNQLQILDLSGNCPRCYNAPFPCAPCKN), 289 to 312 (LTELKVLRLHSNSLQHVPPRWFKN), 314 to 337 (NKLQELDLSQNFLAKEIGDAKFLH), 339 to 368 (LPSLIQLDLSFNFELQVYRASMNLSQAFSS), 369 to 392 (LKSLKILRIRGYVFKELKSFNLSP), 396 to 419 (LQNLEVLDLGTNFIKIANLSMFKQ), and 421 to 443 (KRLKVIDLSVNKISPSGDSSEVG). N-linked (GlcNAc...) asparagine glycosylation is present at Asn361. A glycan (N-linked (GlcNAc...) asparagine) is linked at Asn413. Asn488 is a glycosylation site (N-linked (GlcNAc...) asparagine). 4 LRR repeats span residues 492–515 (YKYGQTLDLSKNSIFFVKSSDFQH), 516–540 (LSFLKCLNLSGNLISQTLNGSEFQP), 541–564 (LAELRYLDFSNNRLDLLHSTAFEE), and 566–588 (HKLEVLDISSNSHYFQSEGITHM). N-linked (GlcNAc...) asparagine glycosylation is found at Asn523 and Asn534. An N-linked (GlcNAc...) asparagine glycan is attached at Asn590. LRR repeat units lie at residues 595 to 618 (LKVLQKLMMNDNDISSSTSRTMES), 619 to 644 (ESLRTLEFRGNHLDVLWREGDNRYLQ), 649 to 672 (LLKLEELDISKNSLSFLPSGVFDG), 674 to 697 (PPNLKNLSLAKNGLKSFSWKKLQC), 698 to 721 (LKNLETLDLSHNQLTTVPERLSNC), 723 to 745 (RSLKNLILKNNQIRSLTKYFLQD), 746 to 769 (AFQLRYLDLSSNKIQMIQKTSFPE), and 772 to 795 (LNNLKMLLLHHNRFLCTCDAVWFV). N-linked (GlcNAc...) asparagine glycosylation is found at Asn679 and Asn720. A glycan (N-linked (GlcNAc...) asparagine) is linked at Asn799. A helical transmembrane segment spans residues 840 to 860 (LILFSLSISVSLFLMVMMTAS). Residues 861-1049 (HLYFWDVWYI…AYSQVFKETV (189 aa)) lie on the Cytoplasmic side of the membrane. The TIR domain maps to 889–1033 (CCYDAFIVYD…YFWQCLKNAL (145 aa)).

This sequence belongs to the Toll-like receptor family. As to quaternary structure, homodimer. Interacts with MYD88 via their respective TIR domains. Interacts with UNC93B1. Interacts with SMPDL3B. In terms of tissue distribution, detected in brain, placenta, spleen, stomach, small intestine, lung and in plasmacytoid pre-dendritic cells. Expressed in peripheral mononuclear blood cells.

The protein localises to the endoplasmic reticulum membrane. It is found in the endosome. The protein resides in the lysosome. Its subcellular location is the cytoplasmic vesicle. It localises to the phagosome. Activated by guanosine analogs including deoxyguanosine, 7-thia-8-oxoguanosine or 7-deazaguanosine in a RNA-independent manner. Activated by imiquimod. In terms of biological role, endosomal receptor that plays a key role in innate and adaptive immunity. Controls host immune response against pathogens through recognition of uridine-containing single strand RNAs (ssRNAs) of viral origin or guanosine analogs. Upon binding to agonists, undergoes dimerization that brings TIR domains from the two molecules into direct contact, leading to the recruitment of TIR-containing downstream adapter MYD88 through homotypic interaction. In turn, the Myddosome signaling complex is formed involving IRAK4, IRAK1, TRAF6, TRAF3 leading to activation of downstream transcription factors NF-kappa-B and IRF7 to induce pro-inflammatory cytokines and interferons, respectively. In plasmacytoid dendritic cells, RNASET2 endonuclease cooperates with PLD3 or PLD4 5'-&gt;3' exonucleases to process RNA and release 2',3'-cyclic guanosine monophosphate (2',3'-cGMP) and cytidine-rich RNA fragments that occupy TLR7 ligand-binding pockets and trigger a signaling-competent state. The chain is Toll-like receptor 7 from Homo sapiens (Human).